A 307-amino-acid polypeptide reads, in one-letter code: Acetyl-coenzyme A carboxylase carboxyl transferase subunit beta (307 aa).

Residues 1-21 (MAMADQRNDKPGRPAAQRERR) form a disordered region. In terms of domain architecture, CoA carboxyltransferase N-terminal spans 43–307 (LWVKCPETGE…MGRERLSPAA (265 aa)).

Belongs to the AccD/PCCB family. As to quaternary structure, acetyl-CoA carboxylase is a heterohexamer composed of biotin carboxyl carrier protein (AccB), biotin carboxylase (AccC) and two subunits each of ACCase subunit alpha (AccA) and ACCase subunit beta (AccD).

It localises to the cytoplasm. It carries out the reaction N(6)-carboxybiotinyl-L-lysyl-[protein] + acetyl-CoA = N(6)-biotinyl-L-lysyl-[protein] + malonyl-CoA. It participates in lipid metabolism; malonyl-CoA biosynthesis; malonyl-CoA from acetyl-CoA: step 1/1. Its function is as follows. Component of the acetyl coenzyme A carboxylase (ACC) complex. Biotin carboxylase (BC) catalyzes the carboxylation of biotin on its carrier protein (BCCP) and then the CO(2) group is transferred by the transcarboxylase to acetyl-CoA to form malonyl-CoA. The polypeptide is Acetyl-coenzyme A carboxylase carboxyl transferase subunit beta (Phenylobacterium zucineum (strain HLK1)).